The chain runs to 766 residues: Ribonuclease Z, mitochondrial (766 aa).

The transit peptide at 1-25 (MYLVKSAGSPIYRTLRTLTTSNLMA) directs the protein to the mitochondrion.

It belongs to the RNase Z family. In terms of assembly, homodimer. It depends on Zn(2+) as a cofactor.

It is found in the nucleus. The protein localises to the mitochondrion. It catalyses the reaction Endonucleolytic cleavage of RNA, removing extra 3' nucleotides from tRNA precursor, generating 3' termini of tRNAs. A 3'-hydroxy group is left at the tRNA terminus and a 5'-phosphoryl group is left at the trailer molecule.. Functionally, zinc phosphodiesterase, which displays some tRNA 3'-processing endonuclease activity of nuclear and mitochondrial pre-tRNA. Probably involved in tRNA maturation, by removing a 3'-trailer from precursor tRNA. May participate in tRNA processing in the developing embryo. The chain is Ribonuclease Z, mitochondrial from Drosophila melanogaster (Fruit fly).